We begin with the raw amino-acid sequence, 390 residues long: 8-amino-7-oxononanoate synthase (390 aa).

Arg-19 serves as a coordination point for substrate. Gly-106 to Tyr-107 is a pyridoxal 5'-phosphate binding site. His-131 contacts substrate. Pyridoxal 5'-phosphate is bound by residues Ser-176, His-204, and Thr-233. Residue Lys-236 is modified to N6-(pyridoxal phosphate)lysine. Thr-350 serves as a coordination point for substrate.

It belongs to the class-II pyridoxal-phosphate-dependent aminotransferase family. BioF subfamily. As to quaternary structure, homodimer. Pyridoxal 5'-phosphate serves as cofactor.

The enzyme catalyses 6-carboxyhexanoyl-[ACP] + L-alanine + H(+) = (8S)-8-amino-7-oxononanoate + holo-[ACP] + CO2. It participates in cofactor biosynthesis; biotin biosynthesis. Functionally, catalyzes the decarboxylative condensation of pimeloyl-[acyl-carrier protein] and L-alanine to produce 8-amino-7-oxononanoate (AON), [acyl-carrier protein], and carbon dioxide. The chain is 8-amino-7-oxononanoate synthase from Pseudomonas putida (strain GB-1).